We begin with the raw amino-acid sequence, 313 residues long: Olfactory receptor 5H15 (313 aa).

The Extracellular segment spans residues 1–28 (MEEENATLLTEFVLTGFLYQPQWKIPLF). Asn5 carries an N-linked (GlcNAc...) asparagine glycan. The chain crosses the membrane as a helical span at residues 29–49 (LAFLVIYLITIMGNLGLIAVI). Topologically, residues 50-56 (WKDPHLH) are cytoplasmic. The chain crosses the membrane as a helical span at residues 57-77 (IPMYLLLGNLAFVDAWISSTV). Over 78–98 (TPKMLNNFLAKSKMISLSECK) the chain is Extracellular. A disulfide bond links Cys97 and Cys179. Residues 99 to 119 (IQFFSIAIGVTTECFLLATMA) form a helical membrane-spanning segment. Residues 120-143 (YDRYVAICKPLLYPAIMTNGLCIR) lie on the Cytoplasmic side of the membrane. A helical transmembrane segment spans residues 144–164 (LLILSYIAGILHALIHEGFLF). Over 165 to 195 (RLTFCNSNIVHHIYCDTIPLSKISCTDSSIN) the chain is Extracellular. Residues 196 to 216 (FLMVFIFSGSIQVFSIVTILI) form a helical membrane-spanning segment. The Cytoplasmic portion of the chain corresponds to 217–240 (SYTFVLFTVLEKKSDKGVRKAFST). A helical transmembrane segment spans residues 241–261 (CGAHLFSVCLYYGPLLLMYVG). The Extracellular segment spans residues 262-271 (PASPQADGQN). The helical transmembrane segment at 272–292 (MVEPLFYTVIIPLLNPIIYSL) threads the bilayer. Over 293-313 (RNKQVIVSFIKMLKRNVKVSY) the chain is Cytoplasmic.

This sequence belongs to the G-protein coupled receptor 1 family.

The protein localises to the cell membrane. In terms of biological role, odorant receptor. This chain is Olfactory receptor 5H15 (OR5H15), found in Homo sapiens (Human).